Reading from the N-terminus, the 200-residue chain is Non-specific lipid transfer protein GPI-anchored 16 (200 aa).

The first 20 residues, Met1 to Gly20, serve as a signal peptide directing secretion. Intrachain disulfides connect Cys27–Cys72, Cys38–Cys56, Cys57–Cys98, and Cys70–Cys107. N-linked (GlcNAc...) asparagine glycosylation is present at Asn87. Residues Ser134 to Ser182 are disordered. The segment covering Ala140–Thr163 has biased composition (low complexity). A lipid anchor (GPI-anchor amidated threonine) is attached at Thr177. Residues Gly178–Leu200 constitute a propeptide, removed in mature form.

This sequence belongs to the plant LTP family. As to expression, expressed in seedlings, preferentially in hypocotyls and roots. Also observed in siliques.

It is found in the cell membrane. In terms of biological role, essential protein involved in female gametophyte development. Probable lipid transfer protein. This chain is Non-specific lipid transfer protein GPI-anchored 16, found in Arabidopsis thaliana (Mouse-ear cress).